The chain runs to 238 residues: Cysteine-rich venom protein pseudechetoxin-like (238 aa).

An N-terminal signal peptide occupies residues 1–19; that stretch reads MIAFLVLLSLAAVLQQSSG. A propeptide spanning residues 20–28 is cleaved from the precursor; it reads TVDFASESS. The SCP domain occupies 38-164; that stretch reads VDKHNDLRRS…STKYLYVCQY (127 aa). 8 disulfide bridges follow: cysteine 75-cysteine 153, cysteine 92-cysteine 165, cysteine 148-cysteine 162, cysteine 184-cysteine 191, cysteine 187-cysteine 196, cysteine 200-cysteine 233, cysteine 209-cysteine 227, and cysteine 218-cysteine 231. The ShKT domain occupies 200 to 233; it reads CKHNDDLSNCKTLVKKHKCQTEWIKSKCPATCFC.

This sequence belongs to the CRISP family. Expressed by the venom gland.

The protein resides in the secreted. Functionally, blocks olfactory (CNGA2) and retinal (CNGA1) CNG channel currents. Does not affect neither depolarization- nor caffeine-induced contraction of smooth muscle. In Pseudonaja textilis (Eastern brown snake), this protein is Cysteine-rich venom protein pseudechetoxin-like.